A 177-amino-acid chain; its full sequence is Anti-apoptotic protein NR13 (177 aa).

Positions 75 to 94 (LETDGGLNWGRLLALVVFAG) match the BH1 motif. A helical transmembrane segment spans residues 86 to 106 (LLALVVFAGTLAAALAESACE). The BH2 signature appears at 126–141 (EWMEEHGGWDGFCRFF). The chain crosses the membrane as a helical span at residues 156–176 (SNAIMAAAGFGIAGLAFLLVV).

Belongs to the Bcl-2 family. As to quaternary structure, interacts with BAX. In terms of tissue distribution, mainly expressed in neural and muscular tissues.

The protein resides in the cell membrane. Its function is as follows. Shows anti-apoptotic properties. Counteract the pro-apoptotic activity of BAX. The polypeptide is Anti-apoptotic protein NR13 (NR13) (Coturnix japonica (Japanese quail)).